A 119-amino-acid chain; its full sequence is Ribosome-binding factor A (119 aa).

This sequence belongs to the RbfA family. Monomer. Binds 30S ribosomal subunits, but not 50S ribosomal subunits or 70S ribosomes.

The protein resides in the cytoplasm. In terms of biological role, one of several proteins that assist in the late maturation steps of the functional core of the 30S ribosomal subunit. Associates with free 30S ribosomal subunits (but not with 30S subunits that are part of 70S ribosomes or polysomes). Required for efficient processing of 16S rRNA. May interact with the 5'-terminal helix region of 16S rRNA. This chain is Ribosome-binding factor A, found in Ligilactobacillus salivarius (strain UCC118) (Lactobacillus salivarius).